A 1232-amino-acid chain; its full sequence is Chromosome-associated kinesin KIF4A (1232 aa).

Residues 9–336 form the Kinesin motor domain; sequence PVRVALRCRP…LRYADRARKI (328 aa). 88–95 contacts ATP; that stretch reads GQTGSGKT. The stretch at 350–999 forms a coiled coil; that stretch reads ELNHLKQQVQ…IKQKLTLLQV (650 aa). Ser-394 bears the Phosphoserine mark. Residues 496–515 form a disordered region; sequence AQVETSPETSRSSDAFTTQH. Over residues 497-515 the composition is skewed to polar residues; sequence QVETSPETSRSSDAFTTQH. The tract at residues 663–1232 is required for the interaction with PRC1; the sequence is QWKQKKDKEV…GCSPIEEEAH (570 aa). The Nuclear localization signal motif lies at 793–798; it reads PKLRRR. Thr-799 is subject to Phosphothreonine. Residues Ser-801, Ser-810, Ser-815, and Ser-951 each carry the phosphoserine modification. The residue at position 995 (Thr-995) is a Phosphothreonine. Residues 1000 to 1232 form a globular region; sequence ASRQKHLPKD…GCSPIEEEAH (233 aa). Phosphoserine is present on residues Ser-1001, Ser-1013, Ser-1017, Ser-1028, and Ser-1126. Residues 1086-1144 are CRD; required for [4Fe-4S] cluster binding and localization to the spindle midzone and midbody during anaphase and telophase; it reads CSCKGWCGNKQCGCRKQKSDCGVDCCCDPTKCRNRQQGKDSLGTVERTQDSEGSFKLED. A disordered region spans residues 1122–1142; that stretch reads QGKDSLGTVERTQDSEGSFKL. Residues 1132–1142 are compositionally biased toward basic and acidic residues; it reads RTQDSEGSFKL. Thr-1181 is modified (phosphothreonine). Ser-1186 carries the post-translational modification Phosphoserine. Lys-1194 participates in a covalent cross-link: Glycyl lysine isopeptide (Lys-Gly) (interchain with G-Cter in SUMO2). Residue Ser-1225 is modified to Phosphoserine.

This sequence belongs to the TRAFAC class myosin-kinesin ATPase superfamily. Kinesin family. Chromokinesin subfamily. As to quaternary structure, interacts with the cytosolic iron-sulfur protein assembly (CIA) complex components CIAO2B and MMS19; the interactions facilitate the transfer of Fe-S clusters to KIF4A to ensure proper localization of KIF4A to mitotic machinery components. Interacts (via C-terminus) with unphosphorylated PRC1 (via N-terminus); the interaction is required for the progression of mitosis. [2Fe-2S] cluster serves as cofactor. [4Fe-4S] cluster is required as a cofactor. In terms of tissue distribution, highly expressed in hematopoietic tissues, fetal liver, spleen, thymus and adult thymus and bone marrow. Lower levels are found in heart, testis, kidney, colon and lung.

The protein localises to the nucleus matrix. It localises to the cytoplasm. It is found in the cytoskeleton. The protein resides in the spindle. Its subcellular location is the midbody. The protein localises to the chromosome. Its function is as follows. Iron-sulfur (Fe-S) cluster binding motor protein that has a role in chromosome segregation during mitosis. Translocates PRC1 to the plus ends of interdigitating spindle microtubules during the metaphase to anaphase transition, an essential step for the formation of an organized central spindle midzone and midbody and for successful cytokinesis. May play a role in mitotic chromosomal positioning and bipolar spindle stabilization. The sequence is that of Chromosome-associated kinesin KIF4A (KIF4A) from Homo sapiens (Human).